We begin with the raw amino-acid sequence, 274 residues long: Hydroxyethylthiazole kinase (274 aa).

Met-46 serves as a coordination point for substrate. 2 residues coordinate ATP: Arg-122 and Thr-173. Gly-200 provides a ligand contact to substrate.

It belongs to the Thz kinase family. Mg(2+) is required as a cofactor.

The catalysed reaction is 5-(2-hydroxyethyl)-4-methylthiazole + ATP = 4-methyl-5-(2-phosphooxyethyl)-thiazole + ADP + H(+). It functions in the pathway cofactor biosynthesis; thiamine diphosphate biosynthesis; 4-methyl-5-(2-phosphoethyl)-thiazole from 5-(2-hydroxyethyl)-4-methylthiazole: step 1/1. Catalyzes the phosphorylation of the hydroxyl group of 4-methyl-5-beta-hydroxyethylthiazole (THZ). In Clostridium tetani (strain Massachusetts / E88), this protein is Hydroxyethylthiazole kinase.